A 93-amino-acid polypeptide reads, in one-letter code: Small ribosomal subunit protein uS19 (93 aa).

The protein belongs to the universal ribosomal protein uS19 family.

Protein S19 forms a complex with S13 that binds strongly to the 16S ribosomal RNA. The protein is Small ribosomal subunit protein uS19 of Micrococcus luteus (strain ATCC 4698 / DSM 20030 / JCM 1464 / CCM 169 / CCUG 5858 / IAM 1056 / NBRC 3333 / NCIMB 9278 / NCTC 2665 / VKM Ac-2230) (Micrococcus lysodeikticus).